Consider the following 318-residue polypeptide: Leucine-rich repeat domain-containing protein YddK (318 aa).

9 LRR repeats span residues 109-129 (NFTS…TNYD), 130-151 (RLVK…QGRN), 153-173 (SITH…DRLS), 174-194 (SVTY…ESCE), 195-216 (WLQY…NKNE), 217-237 (LLLL…LFPN), 238-258 (LNTL…YSNF), 260-280 (NVQT…DFLT), and 284-305 (SIKS…NTSD).

The chain is Leucine-rich repeat domain-containing protein YddK (yddK) from Escherichia coli (strain K12).